The primary structure comprises 663 residues: Probable rhamnogalacturonate lyase B (663 aa).

Residues 1-19 (MRLRTSLGVASACASVASA) form the signal peptide. N-linked (GlcNAc...) asparagine glycosylation is found at N27, N110, N143, N239, N285, N495, N535, N569, N597, and N638.

Belongs to the polysaccharide lyase 4 family.

The protein resides in the secreted. It catalyses the reaction Endotype eliminative cleavage of L-alpha-rhamnopyranosyl-(1-&gt;4)-alpha-D-galactopyranosyluronic acid bonds of rhamnogalacturonan I domains in ramified hairy regions of pectin leaving L-rhamnopyranose at the reducing end and 4-deoxy-4,5-unsaturated D-galactopyranosyluronic acid at the non-reducing end.. Pectinolytic enzymes consist of four classes of enzymes: pectin lyase, polygalacturonase, pectin methylesterase and rhamnogalacturonase. Degrades the rhamnogalacturonan I (RG-I) backbone of pectin. In Aspergillus flavus (strain ATCC 200026 / FGSC A1120 / IAM 13836 / NRRL 3357 / JCM 12722 / SRRC 167), this protein is Probable rhamnogalacturonate lyase B (rglB).